A 1106-amino-acid chain; its full sequence is Solute carrier family 12 member 7 (1106 aa).

Residues 1–143 lie on the Cytoplasmic side of the membrane; the sequence is MVYTALTWQR…PRESKAPCMG (143 aa). Positions 17-83 are disordered; that stretch reads GLVPSHLPQE…SPFIGSAAAD (67 aa). Phosphoserine is present on residues serine 74 and serine 86. A discontinuously helical membrane pass occupies residues 144 to 166; that stretch reads TFIGVYLPCLQNILGVILFLRLT. K(+) contacts are provided by asparagine 155 and isoleucine 156. A chloride-binding site is contributed by valine 159. Residues 167-173 are Extracellular-facing; it reads WIVGAAG. A helical membrane pass occupies residues 174 to 196; sequence VLESFLVVSMCCTCTMLTAVSMS. Residues 197-220 are Cytoplasmic-facing; the sequence is AIATNGVVPAGGSYYMISRSLGPE. The helical transmembrane segment at 221-249 threads the bilayer; the sequence is FGGAVGLCFYLGTTFAGAMYILGTIEIFL. The Extracellular portion of the chain corresponds to 250 to 273; that stretch reads TYISPGAAVFQAETPEGEAAALLH. 2 consecutive transmembrane segments (helical) span residues 274–295 and 296–324; these read NMRV…VGVK and YVNK…KTAF. Residues 325-443 are Extracellular-facing; sequence DPPDIPVCLL…PYVLSDITTY (119 aa). N-linked (GlcNAc...) asparagine glycans are attached at residues asparagine 336, asparagine 355, and asparagine 384. A helical transmembrane segment spans residues 444–464; sequence FTVLVGIYFPSVTGIMAGSNR. Positions 453 and 456 each coordinate K(+). Residue proline 453 participates in chloride binding. Chloride-binding residues include glycine 457 and isoleucine 458. Topologically, residues 465-474 are cytoplasmic; that stretch reads SGDLKDAQKS. A helical membrane pass occupies residues 475-497; the sequence is IPTGTILAIVTTSFIYLSCIVLF. The Extracellular portion of the chain corresponds to 498 to 528; sequence GACIEGVVLRDKFGEALQGNLVIGMLAWPSP. The chain crosses the membrane as a helical span at residues 529–555; it reads WVIVIGSFFSTCGAGLQSLTGAPRLLQ. Over 556–578 the chain is Cytoplasmic; that stretch reads AIARDGIVPFLQVFGHGKANGEP. Transmembrane regions (helical) follow at residues 579–597 and 598–622; these read TWAL…LIAS and LDSV…ACAV. Tyrosine 613 contacts chloride. At 623–636 the chain is on the cytoplasmic side; that stretch reads QTLLRTPNWRPRFK. 2 helical membrane-spanning segments follow: residues 637 to 659 and 660 to 675; these read YYHW…ICSW and YYAL…IYKY. The Cytoplasmic segment spans residues 676 to 1106; sequence IEYRGAEKEW…GGREVITIYS (431 aa). Positions 688-704 are scissor helix; sequence GIRGLSLNAARYALLRV. Residues 980–999 are disordered; that stretch reads RNTASHTAASRAQAPPTPDK. Residues threonine 996 and threonine 1003 each carry the phosphothreonine modification.

Belongs to the SLC12A transporter family. K/Cl co-transporter subfamily. Homodimer; adopts a domain-swap conformation at the scissor helices connecting the transmembrane domain and C-terminal domain. Heterodimer with K-Cl cotransporter SLC12A5. Widely expressed. Higher levels in heart, kidney and lung (at protein level).

The protein localises to the cell membrane. It carries out the reaction K(+)(in) + chloride(in) = K(+)(out) + chloride(out). With respect to regulation, activated by N-ethylmaleimide (NEM). Inhibited by furosemide, DIDS and bumetanide. The inhibition is much stronger in the presence of 50 mM K(+) in the uptake medium. Inhibited by DIOA. Inhibited by WNK3. Mediates electroneutral potassium-chloride cotransport when activated by cell swelling. May mediate K(+) uptake into Deiters' cells in the cochlea and contribute to K(+) recycling in the inner ear. Important for the survival of cochlear outer and inner hair cells and the maintenance of the organ of Corti. May be required for basolateral Cl(-) extrusion in the kidney and contribute to renal acidification. This is Solute carrier family 12 member 7 from Oryctolagus cuniculus (Rabbit).